The primary structure comprises 55 residues: Large ribosomal subunit protein bL33 (55 aa).

This sequence belongs to the bacterial ribosomal protein bL33 family.

This Brucella abortus (strain S19) protein is Large ribosomal subunit protein bL33.